The sequence spans 206 residues: Small ribosomal subunit protein uS4 (206 aa).

The S4 RNA-binding domain occupies 96 to 158 (SRLDNVVYRM…AKKQLRIQNA (63 aa)).

This sequence belongs to the universal ribosomal protein uS4 family. Part of the 30S ribosomal subunit. Contacts protein S5. The interaction surface between S4 and S5 is involved in control of translational fidelity.

Functionally, one of the primary rRNA binding proteins, it binds directly to 16S rRNA where it nucleates assembly of the body of the 30S subunit. In terms of biological role, with S5 and S12 plays an important role in translational accuracy. This Francisella tularensis subsp. holarctica (strain OSU18) protein is Small ribosomal subunit protein uS4.